Consider the following 219-residue polypeptide: Steroid receptor RNA activator 1 (219 aa).

Disordered stretches follow at residues M1 to V90 and S192 to S219. The segment covering Y23 to T32 has biased composition (polar residues). S48 carries the phosphoserine modification. Residues S55–G76 are compositionally biased toward pro residues. The segment covering S192–S203 has biased composition (basic and acidic residues). Polar residues predominate over residues A206–S219.

Belongs to the SRA1 family. SRA1 RNA exists in a ribonucleoprotein complex containing NCOA1. The RNA also forms a complex with PUS1 and RARG in the nucleus. Interacts with AR. As to expression, expressed in various prostate cancer cell lines.

It is found in the nucleus. Its subcellular location is the cytoplasm. Functional RNA which acts as a transcriptional coactivator that selectively enhances steroid receptor-mediated transactivation ligand-independently through a mechanism involving the modulating N-terminal domain (AF-1) of steroid receptors. Also mediates transcriptional coactivation of steroid receptors ligand-dependently through the steroid-binding domain (AF-2). Enhances cellular proliferation and differentiation and promotes apoptosis in vivo. May play a role in tumorigenesis. This chain is Steroid receptor RNA activator 1, found in Rattus norvegicus (Rat).